The chain runs to 1909 residues: Endoribonuclease Dicer homolog 1 (1909 aa).

A disordered region spans residues 99 to 177; it reads TVKENGLQKN…NNKKKRECNN (79 aa). The segment covering 110 to 124 has biased composition (basic and acidic residues); the sequence is GKRDEFSKEEGDKDR. The segment covering 131 to 146 has biased composition (polar residues); that stretch reads SYQSERSNLSGRGHVN. The segment covering 147–177 has biased composition (basic and acidic residues); that stretch reads NSREGDRFMNRKRTRNWDEAGNNKKKRECNN. The Helicase ATP-binding domain maps to 256–433; sequence VLEQAKAKNT…QVDCAIKIRN (178 aa). 269-276 contributes to the ATP binding site; it reads LETGAGKT. A DECH box motif is present at residues 378–381; it reads DECH. One can recognise a Helicase C-terminal domain in the interval 651–812; the sequence is SLIKLLLKYQ…RTDLSHLKDT (162 aa). In terms of domain architecture, Dicer dsRNA-binding fold spans 840–935; the sequence is AVGLVHFYCS…LPDKGSGQDA (96 aa). The disordered stretch occupies residues 929-952; that stretch reads KGSGQDAEKADQDDEGEPVPGTAR. One can recognise a PAZ domain in the interval 1189–1318; the sequence is EVEEDLSKGK…LPPELCVVHP (130 aa). 2 RNase III domains span residues 1342 to 1518 and 1559 to 1707; these read LAVQ…VEGG and FVGL…LDSG. Residues Glu-1597, Asp-1693, and Glu-1696 each contribute to the Mg(2+) site. 2 DRBM domains span residues 1733–1796 and 1831–1906; these read HPVR…ALKE and FTRQ…LLNK. The interval 1801-1831 is disordered; it reads ESKEKHINNGNAGEDQGENENGNKKNGHQPF.

It belongs to the helicase family. Dicer subfamily. Interacts (via N-terminus) with DDL. Interacts (via DRBM domains) with DRB1, DRB2 and DRB5. May interact with AGO1 or AGO10 through their common PAZ domains. The cofactor is Mg(2+). Requires Mn(2+) as cofactor. Highly expressed in flowers and seeds and detected in leaves and stems. Found in ovule integuments, inflorescence and floral meristems, stigma of flowers until just before pollination, vasculature of the funiculus, and embryo.

Its subcellular location is the nucleus. Ribonuclease (RNase) III involved in RNA-mediated post-transcriptional gene silencing (PTGS). Functions in the microRNAs (miRNAs) biogenesis pathway by cleaving primary miRNAs (pri-miRNAs) and precursor miRNAs (pre-miRNAs). Functions with DRB1/HYL1 and SERRATE proteins for accurate pri-miRNAs to miRNAs processing. Indirectly involved in the production of trans-acting small interfering RNAs (ta-siRNAs) derived from the TAS1, TAS2 or TAS3 endogenous transcripts by participating in the production of their initiating miRNAs. Involved in the processing of natural siRNAs (nat-siRNAs, derived from cis-natural antisense transcripts) by cleaving 24 nucleotide nat-siRNAs into 21 nucleotide nat-siRNAs. Can produce RDR6-dependent endogenous ta-siRNAs derived from TAS1 and TAS2. Required for the production of 30-40 nucleotide bacterial-induced long siRNAs (lsiRNA). Acts redundantly with DICER-LIKE 3 (DCL3) to promote flowering via repression of FLOWERING LOCUS C (FLC). Represses antiviral RNA silencing through negative regulation of the expression of DCL4 and DCL3. The protein is Endoribonuclease Dicer homolog 1 (DCL1) of Arabidopsis thaliana (Mouse-ear cress).